Consider the following 441-residue polypeptide: Divalent metal cation transporter MntH (441 aa).

Transmembrane regions (helical) follow at residues 41-61, 74-94, 116-136, 141-161, 183-203, 223-243, 271-291, 311-331, 360-380, 381-401, and 419-439; these read TGIA…IGYM, AAYG…AMLF, HFPA…AMAT, FLGG…AGMI, AAIA…LMIA, AALT…TLYL, VVVA…MAAS, IPVL…TSGV, AVTI…TRAM, VASQ…LLIL, and IVAG…VWAA.

The protein belongs to the NRAMP family.

It is found in the cell inner membrane. H(+)-stimulated, divalent metal cation uptake system. The protein is Divalent metal cation transporter MntH of Burkholderia ambifaria (strain ATCC BAA-244 / DSM 16087 / CCUG 44356 / LMG 19182 / AMMD) (Burkholderia cepacia (strain AMMD)).